A 406-amino-acid polypeptide reads, in one-letter code: uncharacterized protein (406 aa).

Positions 1-36 (MDRVRSLIGNRRGRRHNRQHPPYPHSGSPSTVNLLG) are disordered.

This sequence to yeast YMR316w.

This is an uncharacterized protein from Saccharomyces cerevisiae (strain ATCC 204508 / S288c) (Baker's yeast).